A 299-amino-acid chain; its full sequence is Small ribosomal subunit protein uS2 (299 aa).

The segment at 210–299 (AEKEEQTQVV…GAATDNSWAS (90 aa)) is disordered. Positions 275–285 (WASTGTATVGP) are enriched in polar residues.

Belongs to the universal ribosomal protein uS2 family. As to quaternary structure, component of the small ribosomal subunit. Mature ribosomes consist of a small (40S) and a large (60S) subunit. The 40S subunit contains about 33 different proteins and 1 molecule of RNA (18S). The 60S subunit contains about 49 different proteins and 3 molecules of RNA (28S, 5.8S and 5S). Interacts with ribosomal protein S21.

The protein resides in the cytoplasm. Its function is as follows. Required for the assembly and/or stability of the 40S ribosomal subunit. Required for the processing of the 20S rRNA-precursor to mature 18S rRNA in a late step of the maturation of 40S ribosomal subunits. This chain is Small ribosomal subunit protein uS2, found in Ornithodoros parkeri (Soft tick).